The chain runs to 338 residues: Peptidoglycan deacetylase-like protein FGM2 (338 aa).

The Zn(2+) site is built by Asp49, His124, and His128. The NodB homology domain occupies 65–257 (LSDYSAGIFA…VTNSHGFVSS (193 aa)).

Belongs to the polysaccharide deacetylase family.

In terms of biological role, peptidoglycan deacetylase-like protein; part of the Fg3_54/C64 gene cluster that mediates the biosynthesis of the octapeptide fusaoctaxin A, a virulence factor that is required for cell-to-cell invasiveness of plant host. The 2 nonribosomal peptide synthetases NRPS9 and NRPS5 form an assembly line which likely utilizes GABA as a starter unit (loaded on the unique module M1 of NRPS9) and sequentially incorporates seven extender units composed of the residues L-Ala, L-allo-Ile, L-Ser, L-Val, L-Ser, L-Leu and L-Leu, respectively. During the process, each of the residues that are tethered on modules M3-M7 of NRPS5 containing an E domain can undergo an epimerization reaction to produce a D-configuration before the transpeptidation reaction occurs. The elongation of the peptidyl chain might be terminated by module M8-mediated L-Leu incorporation, followed by R domain-catalyzed 4 electron reduction to release the resulting octapeptide from the assembly line as an alcohol. Fusaoctaxin A is cleaved by the cluster specific ABC transporter FGM5 to the pentapeptide fusapentaxin A and the tripeptide fusatrixin A. The other enzymes from the cluster, FGM1, FGM2, FGM3 and FGM9 seem not to be involved in the biosynthesis of fusaoctaxin A and their functions have still to be determined. The polypeptide is Peptidoglycan deacetylase-like protein FGM2 (Gibberella zeae (strain ATCC MYA-4620 / CBS 123657 / FGSC 9075 / NRRL 31084 / PH-1) (Wheat head blight fungus)).